Here is a 410-residue protein sequence, read N- to C-terminus: DNA replication and repair protein RecF (410 aa).

An ATP-binding site is contributed by 30–37 (GPNGHGKT).

The protein belongs to the RecF family.

The protein resides in the cytoplasm. Functionally, the RecF protein is involved in DNA metabolism; it is required for DNA replication and normal SOS inducibility. RecF binds preferentially to single-stranded, linear DNA. It also seems to bind ATP. The chain is DNA replication and repair protein RecF from Rhodococcus jostii (strain RHA1).